Consider the following 72-residue polypeptide: Long neurotoxin OH-5 (72 aa).

Disulfide bonds link cysteine 3/cysteine 22, cysteine 15/cysteine 43, cysteine 28/cysteine 32, cysteine 47/cysteine 58, and cysteine 59/cysteine 64.

It belongs to the three-finger toxin family. Long-chain subfamily. Type II alpha-neurotoxin sub-subfamily. As to expression, expressed by the venom gland.

It is found in the secreted. Functionally, binds with high affinity to muscular (alpha-1/CHRNA1) and neuronal (alpha-7/CHRNA7) nicotinic acetylcholine receptor (nAChR) and inhibits acetylcholine from binding to the receptor, thereby impairing neuromuscular and neuronal transmission. This chain is Long neurotoxin OH-5, found in Ophiophagus hannah (King cobra).